A 285-amino-acid polypeptide reads, in one-letter code: uncharacterized protein (285 aa).

The signal sequence occupies residues methionine 1 to alanine 25.

This is an uncharacterized protein from Bacillus subtilis (strain 168).